A 539-amino-acid chain; its full sequence is GMP synthase [glutamine-hydrolyzing] (539 aa).

A Glutamine amidotransferase type-1 domain is found at 4 to 203 (KILILDFGSQ…VHDICGCKSD (200 aa)). The active-site Nucleophile is C82. Residues H177 and E179 contribute to the active site. One can recognise a GMPS ATP-PPase domain in the interval 204 to 395 (WNMPDYIAEA…LGLPHDMVYR (192 aa)). An ATP-binding site is contributed by 231–237 (SGGVDSS).

As to quaternary structure, homodimer.

The enzyme catalyses XMP + L-glutamine + ATP + H2O = GMP + L-glutamate + AMP + diphosphate + 2 H(+). It participates in purine metabolism; GMP biosynthesis; GMP from XMP (L-Gln route): step 1/1. In terms of biological role, catalyzes the synthesis of GMP from XMP. In Herminiimonas arsenicoxydans, this protein is GMP synthase [glutamine-hydrolyzing].